The chain runs to 404 residues: 4-hydroxy-3-methylbut-2-en-1-yl diphosphate synthase (ferredoxin) (404 aa).

Residues cysteine 313, cysteine 316, cysteine 347, and glutamate 354 each contribute to the [4Fe-4S] cluster site.

The protein belongs to the IspG family. [4Fe-4S] cluster serves as cofactor.

The catalysed reaction is (2E)-4-hydroxy-3-methylbut-2-enyl diphosphate + 2 oxidized [2Fe-2S]-[ferredoxin] + H2O = 2-C-methyl-D-erythritol 2,4-cyclic diphosphate + 2 reduced [2Fe-2S]-[ferredoxin] + H(+). Its pathway is isoprenoid biosynthesis; isopentenyl diphosphate biosynthesis via DXP pathway; isopentenyl diphosphate from 1-deoxy-D-xylulose 5-phosphate: step 5/6. In terms of biological role, converts 2C-methyl-D-erythritol 2,4-cyclodiphosphate (ME-2,4cPP) into 1-hydroxy-2-methyl-2-(E)-butenyl 4-diphosphate. The chain is 4-hydroxy-3-methylbut-2-en-1-yl diphosphate synthase (ferredoxin) from Crocosphaera subtropica (strain ATCC 51142 / BH68) (Cyanothece sp. (strain ATCC 51142)).